An 86-amino-acid chain; its full sequence is Omega-theraphotoxin-Hhn1f 1 (86 aa).

Positions 1–21 (MKSIVFVALFGLALLAVVCSA) are cleaved as a signal peptide. Residues 22-50 (SEDAHKELLKEVVRAMVVDKTDAVQAEER) constitute a propeptide that is removed on maturation. 3 disulfide bridges follow: Cys-52-Cys-66, Cys-59-Cys-71, and Cys-65-Cys-78.

It belongs to the neurotoxin 10 (Hwtx-1) family. 17 (Hntx-9) subfamily. In terms of tissue distribution, expressed by the venom gland.

It localises to the secreted. Ion channel inhibitor. The sequence is that of Omega-theraphotoxin-Hhn1f 1 from Cyriopagopus hainanus (Chinese bird spider).